The chain runs to 782 residues: Small RNA degrading nuclease 3 (782 aa).

Residues 145–296 (MLSIDCEMVT…HDAAAAMKLV (152 aa)) form the Exonuclease domain. Positions 331–410 (AQLFLHKIPH…KKAVLKLSSG (80 aa)) constitute an RRM 1 domain. The interval 426–464 (PCEISTSERARAEENNVSSKRQKTEDETEETKEATVNQR) is disordered. In terms of domain architecture, RRM 2 spans 469-549 (TKLFLHKIPH…KMVVFKLSSG (81 aa)). Residues 563 to 605 (DSPGEISTTKRARTEESNMSSKRQKTEDESEETKEANAKQREA) form a disordered region. Residues 577 to 605 (EESNMSSKRQKTEDESEETKEANAKQREA) are a coiled coil. Positions 595-605 (TKEANAKQREA) are enriched in basic and acidic residues. Residues 608-688 (TKLLLHKIPL…KMVAFKLSSG (81 aa)) enclose the RRM 3 domain. Positions 709 to 779 (ANANHCEDDH…KMKLEKKQSK (71 aa)) form a coiled coil.

Belongs to the REXO1/REXO3 family. In terms of assembly, associated with the Mediator complex.

It is found in the nucleus. Its function is as follows. 3'-5' exonuclease degrading single-stranded small RNAs. The polypeptide is Small RNA degrading nuclease 3 (SDN3) (Arabidopsis thaliana (Mouse-ear cress)).